The sequence spans 743 residues: Phosphoribosylformylglycinamidine synthase subunit PurL (743 aa).

The active site involves H54. ATP is bound by residues Y57 and K96. Residue E98 participates in Mg(2+) binding. Residues S99–H102 and R121 each bind substrate. The Proton acceptor role is filled by H100. D122 is a binding site for Mg(2+). Q245 provides a ligand contact to substrate. Residue D273 participates in Mg(2+) binding. Residue E317–Q319 participates in substrate binding. Residues D501 and G538 each coordinate ATP. N539 is a binding site for Mg(2+). Residue S541 coordinates substrate.

It belongs to the FGAMS family. As to quaternary structure, monomer. Part of the FGAM synthase complex composed of 1 PurL, 1 PurQ and 2 PurS subunits.

Its subcellular location is the cytoplasm. It carries out the reaction N(2)-formyl-N(1)-(5-phospho-beta-D-ribosyl)glycinamide + L-glutamine + ATP + H2O = 2-formamido-N(1)-(5-O-phospho-beta-D-ribosyl)acetamidine + L-glutamate + ADP + phosphate + H(+). It functions in the pathway purine metabolism; IMP biosynthesis via de novo pathway; 5-amino-1-(5-phospho-D-ribosyl)imidazole from N(2)-formyl-N(1)-(5-phospho-D-ribosyl)glycinamide: step 1/2. Its function is as follows. Part of the phosphoribosylformylglycinamidine synthase complex involved in the purines biosynthetic pathway. Catalyzes the ATP-dependent conversion of formylglycinamide ribonucleotide (FGAR) and glutamine to yield formylglycinamidine ribonucleotide (FGAM) and glutamate. The FGAM synthase complex is composed of three subunits. PurQ produces an ammonia molecule by converting glutamine to glutamate. PurL transfers the ammonia molecule to FGAR to form FGAM in an ATP-dependent manner. PurS interacts with PurQ and PurL and is thought to assist in the transfer of the ammonia molecule from PurQ to PurL. This chain is Phosphoribosylformylglycinamidine synthase subunit PurL, found in Halalkalibacterium halodurans (strain ATCC BAA-125 / DSM 18197 / FERM 7344 / JCM 9153 / C-125) (Bacillus halodurans).